Consider the following 409-residue polypeptide: ATPase ASNA1 homolog (409 aa).

21-28 (KGGVGKTT) contributes to the ATP binding site. Residue Asp62 is part of the active site. Residues Glu303 and Asn330 each coordinate ATP. Zn(2+)-binding residues include Cys342 and Cys345.

This sequence belongs to the arsA ATPase family. As to quaternary structure, homodimer.

Its subcellular location is the cytoplasm. It localises to the endoplasmic reticulum. Its function is as follows. ATPase required for the post-translational delivery of tail-anchored (TA) proteins to the endoplasmic reticulum. Recognizes and selectively binds the transmembrane domain of TA proteins in the cytosol. This complex then targets to the endoplasmic reticulum by membrane-bound receptors, where the tail-anchored protein is released for insertion. This process is regulated by ATP binding and hydrolysis. ATP binding drives the homodimer towards the closed dimer state, facilitating recognition of newly synthesized TA membrane proteins. ATP hydrolysis is required for insertion. Subsequently, the homodimer reverts towards the open dimer state, lowering its affinity for the membrane-bound receptor, and returning it to the cytosol to initiate a new round of targeting. The polypeptide is ATPase ASNA1 homolog (Leishmania infantum).